We begin with the raw amino-acid sequence, 158 residues long: Transcription elongation factor GreA (158 aa).

Belongs to the GreA/GreB family.

In terms of biological role, necessary for efficient RNA polymerase transcription elongation past template-encoded arresting sites. The arresting sites in DNA have the property of trapping a certain fraction of elongating RNA polymerases that pass through, resulting in locked ternary complexes. Cleavage of the nascent transcript by cleavage factors such as GreA or GreB allows the resumption of elongation from the new 3'terminus. GreA releases sequences of 2 to 3 nucleotides. The polypeptide is Transcription elongation factor GreA (Rhizobium johnstonii (strain DSM 114642 / LMG 32736 / 3841) (Rhizobium leguminosarum bv. viciae)).